The chain runs to 61 residues: UPF0434 protein Bpet2671 (61 aa).

Belongs to the UPF0434 family.

The sequence is that of UPF0434 protein Bpet2671 from Bordetella petrii (strain ATCC BAA-461 / DSM 12804 / CCUG 43448).